We begin with the raw amino-acid sequence, 426 residues long: Probable auxin efflux carrier component 9 (426 aa).

Topologically, residues Met-1–Glu-6 are extracellular. Residues Val-7–Ser-27 traverse the membrane as a helical segment. Topologically, residues Val-28–Gln-38 are cytoplasmic. Residues Cys-39 to Val-59 form a helical membrane-spanning segment. A (indol-3-yl)acetate-binding site is contributed by Val-51. Over Ser-60–Arg-70 the chain is Extracellular. The chain crosses the membrane as a helical span at residues Leu-71–Leu-91. Topologically, residues Trp-92–Trp-114 are cytoplasmic. The helical transmembrane segment at Val-115 to Leu-135 threads the bilayer. The (indol-3-yl)acetate site is built by Asn-126 and Ile-128. The Extracellular portion of the chain corresponds to Asn-136–Asp-145. Residues Leu-146–Tyr-166 form a helical membrane-spanning segment. Residue Tyr-159 participates in (indol-3-yl)acetate binding. Topologically, residues Glu-167–Ser-286 are cytoplasmic. The tract at residues Arg-232–Glu-258 is disordered. Residues Phe-287 to Val-307 form a helical membrane-spanning segment. Residues Glu-308–Ser-310 are Extracellular-facing. A helical membrane pass occupies residues Leu-311–Ala-331. Over Arg-332–Ser-347 the chain is Cytoplasmic. Residues Met-348–Met-368 form a helical membrane-spanning segment. Residues His-369–Thr-371 are Extracellular-facing. Residues Leu-372–Ala-392 form a helical membrane-spanning segment. Val-386 is a binding site for (indol-3-yl)acetate. Topologically, residues Glu-393–Gly-405 are cytoplasmic. A helical membrane pass occupies residues Val-406 to Leu-426.

It belongs to the auxin efflux carrier (TC 2.A.69.1) family. As to quaternary structure, homodimer. As to expression, expressed in roots, leaves and shoot apex. Expressed in roots, stem bases, stems, leaves and young panicles.

Its subcellular location is the membrane. Functionally, may act as a component of the auxin efflux carrier. The sequence is that of Probable auxin efflux carrier component 9 from Oryza sativa subsp. japonica (Rice).